We begin with the raw amino-acid sequence, 163 residues long: MASNKVVFSVLLLVVLSVLAAAMATMADHHQVYSPGEQCRPGISYPTYSLPQCRTLVRRQCVGRGAASAADEQVWQDCCRQLAAVDDGWCRCGALDHMLSGIYRELGATEAGHPMAEVFPGCRRGDLERAAASLPAFCNVDIPNGPGGVCYWLGYPRTPRTGH.

A signal peptide spans 1–27 (MASNKVVFSVLLLVVLSVLAAAMATMA). Disulfide bonds link C39–C90, C53–C78, C61–C122, C79–C138, and C92–C150.

It belongs to the cereal trypsin/alpha-amylase inhibitor family. In terms of processing, five disulfide bonds are present.

The protein resides in the secreted. In terms of biological role, seed storage protein. The protein is Seed allergenic protein RAG1 (RAG1) of Oryza sativa subsp. japonica (Rice).